Consider the following 537-residue polypeptide: Glucans biosynthesis protein D 2 (537 aa).

Positions 1-28 (MVTRRHLLASASLSATLAALGITPEALA) form a signal peptide, tat-type signal.

It belongs to the OpgD/OpgG family. Post-translationally, predicted to be exported by the Tat system. The position of the signal peptide cleavage has not been experimentally proven.

Its subcellular location is the periplasm. The protein operates within glycan metabolism; osmoregulated periplasmic glucan (OPG) biosynthesis. Probably involved in the control of the structural glucose backbone of osmoregulated periplasmic glucans (OPGs). The sequence is that of Glucans biosynthesis protein D 2 (opgD2) from Ralstonia nicotianae (strain ATCC BAA-1114 / GMI1000) (Ralstonia solanacearum).